The chain runs to 307 residues: Regulating synaptic membrane exocytosis protein 3 (307 aa).

The interval 86-120 is disordered; sequence STETGIAVEMRSRVTRQGSRESTDGSTNSNSSEGT. A compositionally biased stretch (polar residues) spans 109–119; sequence DGSTNSNSSEG. The C2 domain maps to 155–273; that stretch reads PMGDVHIAIM…DLSAVVTGWY (119 aa). Phosphoserine is present on residues Ser-294 and Ser-297.

In terms of assembly, binds PPFIA3. Does not bind RAB3. As to expression, expressed exclusively in brain with significant levels in cortex, cerebellum and olfactory bulb. Detected at lower level in hippocampus.

It is found in the synapse. In terms of biological role, regulates synaptic membrane exocytosis. The sequence is that of Regulating synaptic membrane exocytosis protein 3 (Rims3) from Rattus norvegicus (Rat).